The primary structure comprises 457 residues: Karyogamy meiotic segregation protein 2 (457 aa).

Serine 134 is modified (phosphoserine).

In terms of assembly, interacts with sad1.

The protein localises to the cytoplasm. Its subcellular location is the cytoskeleton. The protein resides in the microtubule organizing center. It localises to the spindle pole body. The polypeptide is Karyogamy meiotic segregation protein 2 (kms2) (Schizosaccharomyces pombe (strain 972 / ATCC 24843) (Fission yeast)).